The sequence spans 442 residues: Ribosomal protein uS12 methylthiotransferase RimO (442 aa).

The region spanning 9–119 (PRIGFVSLGC…VLSHVHQYVP (111 aa)) is the MTTase N-terminal domain. Positions 18, 54, 83, 151, 155, and 158 each coordinate [4Fe-4S] cluster. The Radical SAM core domain occupies 137 to 375 (LTPRHYAYLK…QLQQAISTQR (239 aa)). The region spanning 377 to 442 (QDKIGREVLV…DEYDLWGSRV (66 aa)) is the TRAM domain.

It belongs to the methylthiotransferase family. RimO subfamily. [4Fe-4S] cluster serves as cofactor.

The protein resides in the cytoplasm. The enzyme catalyses L-aspartate(89)-[ribosomal protein uS12]-hydrogen + (sulfur carrier)-SH + AH2 + 2 S-adenosyl-L-methionine = 3-methylsulfanyl-L-aspartate(89)-[ribosomal protein uS12]-hydrogen + (sulfur carrier)-H + 5'-deoxyadenosine + L-methionine + A + S-adenosyl-L-homocysteine + 2 H(+). Functionally, catalyzes the methylthiolation of an aspartic acid residue of ribosomal protein uS12. The polypeptide is Ribosomal protein uS12 methylthiotransferase RimO (Pectobacterium atrosepticum (strain SCRI 1043 / ATCC BAA-672) (Erwinia carotovora subsp. atroseptica)).